Reading from the N-terminus, the 859-residue chain is Protein FAM171A1 (859 aa).

The signal sequence occupies residues 1–20 (MSGSTAVALLFCVLSCSVWG). Topologically, residues 21–307 (AGSKASHEHN…VTQDITSYHT (287 aa)) are extracellular. N163, N194, and N198 each carry an N-linked (GlcNAc...) asparagine glycan. Residues 308–328 (IFLLAILGGIAFILLVLLCIL) traverse the membrane as a helical segment. Over 329-859 (LYYCRRKCLK…ERPLLAFNKK (531 aa)) the chain is Cytoplasmic. Disordered regions lie at residues 397–421 (SRDF…LDNL), 484–509 (TNHV…PEPE), and 771–859 (QSPS…FNKK). Basic and acidic residues predominate over residues 400–416 (FGSREELLSHQEEKSRM). Polar residues-rich tracts occupy residues 484 to 497 (TNHV…NIQE) and 797 to 806 (SGSQTPSLQE). Residues 838–852 (GENKKSPWQKREERP) are compositionally biased toward basic and acidic residues.

Belongs to the FAM171 family.

Its subcellular location is the cell membrane. Functionally, may be involved in the regulation of the cytoskeletal dynamics, plays a role in actin stress fiber formation. In Xenopus laevis (African clawed frog), this protein is Protein FAM171A1 (fam171a1).